Here is a 331-residue protein sequence, read N- to C-terminus: NADH-quinone oxidoreductase subunit H (331 aa).

The next 8 helical transmembrane spans lie at 7–27 (ALVTIILTVVKAIVVLLAVVI), 81–101 (MIFTLAPVIAMGALLVAFAIV), 114–134 (IGILFFFAMAGLTVYAVLFAG), 154–174 (ISYEVFLALSLMGIVAQVGSF), 187–207 (VWFIIPQFFGFCTFIIAGVAV), 238–258 (FFVGEYIGIVLVSALLATLFF), 271–291 (WLSFFYFAAKTGFFIMLFILI), and 310–330 (VCLPLTLINLLVTGALVLAAA).

This sequence belongs to the complex I subunit 1 family. NDH-1 is composed of 13 different subunits. Subunits NuoA, H, J, K, L, M, N constitute the membrane sector of the complex.

The protein localises to the cell inner membrane. The catalysed reaction is a quinone + NADH + 5 H(+)(in) = a quinol + NAD(+) + 4 H(+)(out). In terms of biological role, NDH-1 shuttles electrons from NADH, via FMN and iron-sulfur (Fe-S) centers, to quinones in the respiratory chain. The immediate electron acceptor for the enzyme in this species is believed to be ubiquinone. Couples the redox reaction to proton translocation (for every two electrons transferred, four hydrogen ions are translocated across the cytoplasmic membrane), and thus conserves the redox energy in a proton gradient. This subunit may bind ubiquinone. The protein is NADH-quinone oxidoreductase subunit H of Pseudomonas aeruginosa (strain ATCC 15692 / DSM 22644 / CIP 104116 / JCM 14847 / LMG 12228 / 1C / PRS 101 / PAO1).